A 510-amino-acid polypeptide reads, in one-letter code: ATP synthase subunit alpha (510 aa).

Position 169-176 (169-176) interacts with ATP; the sequence is GDRQTGKS.

It belongs to the ATPase alpha/beta chains family. As to quaternary structure, F-type ATPases have 2 components, CF(1) - the catalytic core - and CF(0) - the membrane proton channel. CF(1) has five subunits: alpha(3), beta(3), gamma(1), delta(1), epsilon(1). CF(0) has three main subunits: a(1), b(2) and c(9-12). The alpha and beta chains form an alternating ring which encloses part of the gamma chain. CF(1) is attached to CF(0) by a central stalk formed by the gamma and epsilon chains, while a peripheral stalk is formed by the delta and b chains.

The protein localises to the cell membrane. The catalysed reaction is ATP + H2O + 4 H(+)(in) = ADP + phosphate + 5 H(+)(out). In terms of biological role, produces ATP from ADP in the presence of a proton gradient across the membrane. The alpha chain is a regulatory subunit. This is ATP synthase subunit alpha from Wigglesworthia glossinidia brevipalpis.